The following is a 568-amino-acid chain: Alpha-1,3-galactosidase A (568 aa).

The first 17 residues, 1–17 (MMSVWFIQLAIFAQSRI), serve as a signal peptide directing secretion. PbH1 repeat units follow at residues 87-125 (LYLNTLKNITIDGCGSTLLMNGEMTSFVLDKCEGIVLKN), 243-265 (SKGILLENINFYYLGNFGVVCQY), 299-321 (RGMIDIKNSRFIGAHDDPINIHG), 409-431 (TPEVRITNNYFARVPTRGILITT), 432-454 (RRKSLIEGNTFYGMQMSGIFVAD), and 465-486 (VHDLTIRQNTFLNCGEPIISID).

This sequence belongs to the glycosyl hydrolase 110 family. A subfamily.

The catalysed reaction is Hydrolysis of terminal, non-reducing branched (1-&gt;3)-alpha-D-galactosidic residues, producing free D-galactose.. It carries out the reaction Hydrolysis of terminal, non-reducing alpha-D-galactose residues in alpha-D-galactosides, including galactose oligosaccharides, galactomannans and galactolipids.. In terms of biological role, alpha-galactosidase that specifically removes branched alpha-1,3-linked galactose residues present in blood group B antigens. Has no activity toward linear alpha-1,3-linked galactose residues. The polypeptide is Alpha-1,3-galactosidase A (glaA) (Bacteroides thetaiotaomicron (strain ATCC 29148 / DSM 2079 / JCM 5827 / CCUG 10774 / NCTC 10582 / VPI-5482 / E50)).